Here is a 491-residue protein sequence, read N- to C-terminus: G2/mitotic-specific cyclin-A (491 aa).

A disordered region spans residues 1-21 (MASFQIHQDMSNKENPGIKIP). The 127-residue stretch at 206 to 332 (DILEYFRESE…ILKILSFDLC (127 aa)) folds into the Cyclin N-terminal domain.

The protein belongs to the cyclin family. Cyclin AB subfamily. Component of the Frs-CycA-Cdk1 complex composed of CycA, Cdk1 and Z600. Interacts (via C-terminus) with Z600. Interacts with otu and (via C-terminus) with bam; the interaction stabilizes CycA by negatively regulating its ubiquitination. Post-translationally, ubiquitinated. Ubiquitination state is negatively regulated by a deubiquitinase complex made up of bam and otu.

Functionally, essential for the control of the cell cycle at the G2/M (mitosis) transition. Interacts with the Cdk1 and Cdk2 protein kinases to form MPF. G2/M cyclins accumulate steadily during G2 and are abruptly destroyed at mitosis. The polypeptide is G2/mitotic-specific cyclin-A (CycA) (Drosophila melanogaster (Fruit fly)).